The chain runs to 304 residues: Probable UDP-3-O-acylglucosamine N-acyltransferase 2, mitochondrial (304 aa).

Residues 1 to 47 (MAATLWRLYSKSICNSLQGIILNKPFIQKQLLLSSRTRSLSFSSDSQ) constitute a mitochondrion transit peptide. UDP-N-acetyl-alpha-D-glucosamine is bound at residue 159 to 161 (FGF). The hexadecanoate site is built by D209 and Q213. Residue H216 is the Proton acceptor of the active site. N217, S235, and H253 together coordinate UDP-N-acetyl-alpha-D-glucosamine.

Belongs to the transferase hexapeptide repeat family. LpxD subfamily. In terms of assembly, homotrimer.

It localises to the mitochondrion. The catalysed reaction is a UDP-3-O-[(3R)-3-hydroxyacyl]-alpha-D-glucosamine + a (3R)-hydroxyacyl-[ACP] = a UDP-2-N,3-O-bis[(3R)-3-hydroxyacyl]-alpha-D-glucosamine + holo-[ACP] + H(+). It functions in the pathway glycolipid biosynthesis; lipid IV(A) biosynthesis; lipid IV(A) from (3R)-3-hydroxytetradecanoyl-[acyl-carrier-protein] and UDP-N-acetyl-alpha-D-glucosamine: step 3/6. In terms of biological role, involved in the biosynthesis of lipid A, a phosphorylated glycolipid that in bacteria anchors the lipopolysaccharide to the outer membrane of the cell. Lipid A-like molecules in plants may serve as structural components of the outer membranes of mitochondria and/or chloroplasts, or may be involved in signal transduction or plant defense responses. The chain is Probable UDP-3-O-acylglucosamine N-acyltransferase 2, mitochondrial (LPXD2) from Arabidopsis thaliana (Mouse-ear cress).